We begin with the raw amino-acid sequence, 293 residues long: Putative DNA glycosylase At3g47830 (293 aa).

The segment covering 1–10 has biased composition (basic residues); that stretch reads MSKAQKRKRL. The disordered stretch occupies residues 1-34; sequence MSKAQKRKRLNKYDGESKTPANKSTVDGGNPYPT. Positions 108 and 151 each coordinate DNA. Lys-196 functions as the Schiff-base intermediate with DNA in the catalytic mechanism. DNA-binding residues include His-216 and Asp-232.

It belongs to the DNA glycosylase family.

The polypeptide is Putative DNA glycosylase At3g47830 (Arabidopsis thaliana (Mouse-ear cress)).